Here is a 416-residue protein sequence, read N- to C-terminus: Tiggy-winkle hedgehog protein (416 aa).

An N-terminal signal peptide occupies residues 1 to 26; that stretch reads MDVRLHLKQFALLCFISLLLTPCGLA. The N-palmitoyl cysteine moiety is linked to residue cysteine 27. 7 residues coordinate Ca(2+): glutamate 92, glutamate 93, aspartate 98, threonine 128, glutamate 129, aspartate 132, and aspartate 134. Histidine 143, aspartate 150, and histidine 185 together coordinate Zn(2+). A lipid anchor (Cholesterol glycine ester) is attached at glycine 200.

Belongs to the hedgehog family. In terms of assembly, multimer. Interacts with HHATL/GUP1 which negatively regulates HHAT-mediated palmitoylation of the TWHH N-terminus. Interacts with BOC and CDON. Interacts with HHIP. Interacts with DISP1 via its cholesterol anchor. Interacts with SCUBE2. Post-translationally, the C-terminal domain displays an autoproteolysis activity and a cholesterol transferase activity. Both activities result in the cleavage of the full-length protein into two parts (N-product and C-product) followed by the covalent attachment of a cholesterol moiety to the C-terminal of the newly generated N-product. Cholesterylation is required for the tiggy-winkle hedgehog protein N-product targeting to lipid rafts and multimerization. N-product is the active species in both local and long-range signaling, whereas the C-product is degraded in the endoplasmic reticulum. N-palmitoylation by HHAT of N-product is required for tiggy-winkle hedgehog protein N-product multimerization and full activity. It is a prerequisite for the membrane-proximal positioning and the subsequent shedding of this N-terminal peptide. In terms of processing, the lipidated N- and C-terminal peptides of N-product can be cleaved (shedding). The N-terminal palmitoylated peptide is cleaved at the Cardin-Weintraub (CW) motif site. The cleavage reduced the interactions with heparan sulfate. The cleavage is enhanced by SCUBE2. In terms of tissue distribution, expressed in the ventral midline of the neural tube and brain. In the developing brain, expression occurs in domains that include a discrete region in the floor of the diencephalon. Not detected in the notochord or developing fin bud.

It localises to the cell membrane. The protein resides in the endoplasmic reticulum membrane. Its subcellular location is the golgi apparatus membrane. The C-terminal part of the tiggy-winkle hedgehog protein precursor displays an autoproteolysis and a cholesterol transferase activity. Both activities result in the cleavage of the full-length protein into two parts (N-product and C-product) followed by the covalent attachment of a cholesterol moiety to the C-terminal of the newly generated N-product. Both activities occur in the endoplasmic reticulum. Once cleaved, the C-product is degraded in the endoplasmic reticulum. Functionally, the dually lipidated tiggy-winkle hedgehog protein N-product is a morphogen which is essential for a variety of patterning events during development. Involved in dorso-ventral patterning of the brain and in early patterning of the developing eyes. Binds to the patched (PTCH1) receptor, which functions in association with smoothened (SMO), to activate the transcription of target genes. The polypeptide is Tiggy-winkle hedgehog protein (shhb) (Danio rerio (Zebrafish)).